The sequence spans 356 residues: Protein RecA (356 aa).

68 to 75 is a binding site for ATP; it reads GPESSGKT.

The protein belongs to the RecA family.

It is found in the cytoplasm. In terms of biological role, can catalyze the hydrolysis of ATP in the presence of single-stranded DNA, the ATP-dependent uptake of single-stranded DNA by duplex DNA, and the ATP-dependent hybridization of homologous single-stranded DNAs. It interacts with LexA causing its activation and leading to its autocatalytic cleavage. This chain is Protein RecA, found in Clostridium botulinum (strain Eklund 17B / Type B).